A 265-amino-acid chain; its full sequence is Small ribosomal subunit protein eS4 (265 aa).

The 63-residue stretch at 42–104 (LPLILIIRNR…TNENYRLLYD (63 aa)) folds into the S4 RNA-binding domain.

It belongs to the eukaryotic ribosomal protein eS4 family.

The protein resides in the cytoplasm. The sequence is that of Small ribosomal subunit protein eS4 (RPS4) from Zea mays (Maize).